We begin with the raw amino-acid sequence, 460 residues long: Cysteine--tRNA ligase (460 aa).

Cys28 lines the Zn(2+) pocket. A 'HIGH' region motif is present at residues Met30 to His40. Zn(2+)-binding residues include Cys209, His234, and Glu238. The short motif at Lys266–Ser270 is the 'KMSKS' region element. Lys269 lines the ATP pocket.

Belongs to the class-I aminoacyl-tRNA synthetase family. Monomer. The cofactor is Zn(2+).

The protein localises to the cytoplasm. It catalyses the reaction tRNA(Cys) + L-cysteine + ATP = L-cysteinyl-tRNA(Cys) + AMP + diphosphate. The chain is Cysteine--tRNA ligase from Pseudomonas paraeruginosa (strain DSM 24068 / PA7) (Pseudomonas aeruginosa (strain PA7)).